We begin with the raw amino-acid sequence, 135 residues long: Phosphoribosyl-AMP cyclohydrolase (135 aa).

Aspartate 78 is a binding site for Mg(2+). Cysteine 79 contributes to the Zn(2+) binding site. Mg(2+) contacts are provided by aspartate 80 and aspartate 82. Residues cysteine 96 and cysteine 103 each coordinate Zn(2+).

The protein belongs to the PRA-CH family. As to quaternary structure, homodimer. The cofactor is Mg(2+). Zn(2+) serves as cofactor.

It is found in the cytoplasm. The catalysed reaction is 1-(5-phospho-beta-D-ribosyl)-5'-AMP + H2O = 1-(5-phospho-beta-D-ribosyl)-5-[(5-phospho-beta-D-ribosylamino)methylideneamino]imidazole-4-carboxamide. The protein operates within amino-acid biosynthesis; L-histidine biosynthesis; L-histidine from 5-phospho-alpha-D-ribose 1-diphosphate: step 3/9. Its function is as follows. Catalyzes the hydrolysis of the adenine ring of phosphoribosyl-AMP. The protein is Phosphoribosyl-AMP cyclohydrolase of Cupriavidus metallidurans (strain ATCC 43123 / DSM 2839 / NBRC 102507 / CH34) (Ralstonia metallidurans).